The chain runs to 628 residues: Vacuolar-sorting receptor 4 (628 aa).

An N-terminal signal peptide occupies residues 1–24 (MKQLLCYLPWLLLLSLVVSPFNEA). Topologically, residues 25 to 569 (RFVVEKNSLS…SKTGSQVKSA (545 aa)) are lumenal. Positions 56 to 168 (QYGGSMAGTV…GFGEKLKKAI (113 aa)) constitute a PA domain. N-linked (GlcNAc...) asparagine glycosylation is found at Asn-148, Asn-294, and Asn-434. EGF-like domains are found at residues 416–466 (ETNE…SHCE) and 469–516 (GPGR…KKCE). 7 cysteine pairs are disulfide-bonded: Cys-420/Cys-438, Cys-427/Cys-447, Cys-449/Cys-465, Cys-473/Cys-493, Cys-480/Cys-501, Cys-503/Cys-515, and Cys-545/Cys-558. Residues 517–559 (DINECKEKKACQCPECSCKNTWGSYECSCSGDLLYMRDHDTCI) enclose the EGF-like 3; calcium-binding domain. Residues 570–590 (WAAVWLIMLSLGLAAAGAYLV) form a helical membrane-spanning segment. Over 591–628 (YKYRLRQYMDSEIRAIMAQYMPLDSQPEVPNHTNDERA) the chain is Cytoplasmic. Residues 610 to 613 (YMPL) carry the Tyrosine-based internalization motif motif.

Belongs to the VSR (BP-80) family. As to expression, expressed at low levels in seeds, seedlings, roots, stems, leaves, flowers and siliques.

The protein resides in the membrane. The protein localises to the golgi apparatus membrane. It localises to the cytoplasmic vesicle. Its subcellular location is the clathrin-coated vesicle membrane. It is found in the prevacuolar compartment membrane. Functionally, vacuolar-sorting receptor (VSR) involved in clathrin-coated vesicles sorting from Golgi apparatus to vacuoles. The chain is Vacuolar-sorting receptor 4 (VSR4) from Arabidopsis thaliana (Mouse-ear cress).